Reading from the N-terminus, the 142-residue chain is Large ribosomal subunit protein uL13 (142 aa).

This sequence belongs to the universal ribosomal protein uL13 family. As to quaternary structure, part of the 50S ribosomal subunit.

This protein is one of the early assembly proteins of the 50S ribosomal subunit, although it is not seen to bind rRNA by itself. It is important during the early stages of 50S assembly. The polypeptide is Large ribosomal subunit protein uL13 (Methylococcus capsulatus (strain ATCC 33009 / NCIMB 11132 / Bath)).